The chain runs to 200 residues: MAFAEQTPLTLHRRDLCSRSIWLARKIRSDLTALMESYVKHQGLNKNINLDSVDGVPVASTDRWSEMTEAERLQENLQAYRTFQGMLTKLLEDQRVHFTPTEGDFHQAIHTLMLQVSAFAYQLEELMVLLEQKIPENEADGMPATVGDGGLFEKKLWGLKVLQELSQWTVRSIHDLRVISSHQMGISALESHYGAKDKQM.

This sequence belongs to the CNTF family. As to expression, nervous system.

It is found in the cytoplasm. Its function is as follows. CNTF is a survival factor for various neuronal cell types. Seems to prevent the degeneration of motor axons after axotomy. In Rattus norvegicus (Rat), this protein is Ciliary neurotrophic factor (Cntf).